The primary structure comprises 631 residues: Forkhead box protein O1 (631 aa).

The span at 1-11 shows a compositional bias: pro residues; sequence MAEAPQPPPPL. Disordered stretches follow at residues 1–57, 90–147, 223–324, and 372–404; these read MAEA…PAAG, DIRQ…SRRN, SSWW…MPEQ, and PNSS…PNSE. 2 stretches are compositionally biased toward low complexity: residues 37 to 48 and 100 to 135; these read NPSSSANSSPAP and QQQQ…PLGA. The segment at residues 149 to 243 is a DNA-binding region (fork-head); it reads WGNLSYADLI…KNGKSPRRRA (95 aa). Residues 253–264 are compositionally biased toward basic residues; that stretch reads AKSRGRAAKKKA. Positions 265-282 are enriched in low complexity; sequence SMQSSQDGSSDSPGSQFS. Composition is skewed to polar residues over residues 303-315 and 381-403; these read RPRT…TISG and ASMM…SPNS.

Post-translationally, phosphorylated by AKT1; insulin-induced. In terms of processing, IGF1 rapidly induces phosphorylation of Thr-28, Ser-245 and Ser-308. Phosphorylation of Ser-245 decreases DNA-binding activity and promotes the phosphorylation of Thr-28, and Ser-308, which leads to nuclear exclusion and loss of function. Phosphorylation of Ser-318 is independent of IGF1 and leads to reduced function. In terms of tissue distribution, localized to the animal hemisphere during early cleavage stages. At early tadpole stages, expressed in the branchial arches, pronephros and liver. Within the head, expressed in the forming thyroid gland and in head mesenchyme anterior to the eyes.

It localises to the cytoplasm. Its subcellular location is the nucleus. Functionally, transcription factor that regulates metabolic homeostasis in response to oxidative stress. Binds to the consensus sequence 5'-TT[G/A]TTTTG-3' and the related Daf-16 family binding element (DBE) with consensus sequence 5'-TT[G/A]TTTAC-3'. Main regulator of redox balance and osteoblast numbers and controls bone mass. Orchestrates the endocrine function of the skeleton in regulating glucose metabolism. Also acts as a key regulator of chondrogenic commitment of skeletal progenitor cells in response to lipid availability: when lipids levels are low, translocates to the nucleus and promotes expression of sox9, which induces chondrogenic commitment and suppresses fatty acid oxidation. Acts synergistically with atf4 to suppress osteocalcin/bglap activity, increasing glucose levels and triggering glucose intolerance and insulin insensitivity. Also suppresses the transcriptional activity of runx2, an upstream activator of osteocalcin/bglap. May act as a positive regulator of apoptosis in cardiac smooth muscle cells as a result of its transcriptional activation of pro-apoptotic genes. The chain is Forkhead box protein O1 from Xenopus laevis (African clawed frog).